A 122-amino-acid polypeptide reads, in one-letter code: UPF0738 protein YjbL (122 aa).

Belongs to the UPF0738 family.

In Bacillus subtilis (strain 168), this protein is UPF0738 protein YjbL (yjbL).